Reading from the N-terminus, the 500-residue chain is Probable cytosol aminopeptidase (500 aa).

Mn(2+) contacts are provided by Lys-265 and Asp-270. Residue Lys-277 is part of the active site. 3 residues coordinate Mn(2+): Asp-288, Asp-347, and Glu-349. Arg-351 is a catalytic residue.

The protein belongs to the peptidase M17 family. Mn(2+) is required as a cofactor.

Its subcellular location is the cytoplasm. The catalysed reaction is Release of an N-terminal amino acid, Xaa-|-Yaa-, in which Xaa is preferably Leu, but may be other amino acids including Pro although not Arg or Lys, and Yaa may be Pro. Amino acid amides and methyl esters are also readily hydrolyzed, but rates on arylamides are exceedingly low.. The enzyme catalyses Release of an N-terminal amino acid, preferentially leucine, but not glutamic or aspartic acids.. In terms of biological role, presumably involved in the processing and regular turnover of intracellular proteins. Catalyzes the removal of unsubstituted N-terminal amino acids from various peptides. This is Probable cytosol aminopeptidase from Corynebacterium glutamicum (strain ATCC 13032 / DSM 20300 / JCM 1318 / BCRC 11384 / CCUG 27702 / LMG 3730 / NBRC 12168 / NCIMB 10025 / NRRL B-2784 / 534).